We begin with the raw amino-acid sequence, 328 residues long: Glyoxylate reductase/hydroxypyruvate reductase (328 aa).

S36 is subject to Phosphoserine. Residue V83–G84 coordinates substrate. NADP(+) is bound by residues G162–I164, R185–R188, S217, and I243. Substrate-binding residues include R245 and D269. S272 is subject to Phosphoserine. The Proton donor role is filled by H293. H293–S296 contributes to the substrate binding site. G295 serves as a coordination point for NADP(+). Position 298 is a phosphothreonine (T298).

The protein belongs to the D-isomer specific 2-hydroxyacid dehydrogenase family. As to quaternary structure, homodimer. Ubiquitous. Most abundantly expressed in the liver.

It catalyses the reaction glycolate + NADP(+) = glyoxylate + NADPH + H(+). The enzyme catalyses (R)-glycerate + NAD(+) = 3-hydroxypyruvate + NADH + H(+). It carries out the reaction (R)-glycerate + NADP(+) = 3-hydroxypyruvate + NADPH + H(+). In terms of biological role, enzyme with hydroxy-pyruvate reductase, glyoxylate reductase and D-glycerate dehydrogenase enzymatic activities. Reduces hydroxypyruvate to D-glycerate, glyoxylate to glycolate, oxidizes D-glycerate to hydroxypyruvate. In Homo sapiens (Human), this protein is Glyoxylate reductase/hydroxypyruvate reductase (GRHPR).